Here is a 337-residue protein sequence, read N- to C-terminus: Ribosomal RNA small subunit methyltransferase H (337 aa).

Residues 36–38 (GGH), D56, F82, D100, and Q107 contribute to the S-adenosyl-L-methionine site. Residues 317–337 (RRSGRIPNPQSPIPASQGDAR) are disordered.

Belongs to the methyltransferase superfamily. RsmH family.

It is found in the cytoplasm. The catalysed reaction is cytidine(1402) in 16S rRNA + S-adenosyl-L-methionine = N(4)-methylcytidine(1402) in 16S rRNA + S-adenosyl-L-homocysteine + H(+). Specifically methylates the N4 position of cytidine in position 1402 (C1402) of 16S rRNA. The chain is Ribosomal RNA small subunit methyltransferase H from Xanthomonas oryzae pv. oryzae (strain KACC10331 / KXO85).